Reading from the N-terminus, the 169-residue chain is Sec-independent protein translocase protein TatB (169 aa).

A helical membrane pass occupies residues Met-1 to Gly-21. A disordered region spans residues Glu-98–Arg-169. Basic and acidic residues predominate over residues Pro-134–Ala-143. Positions Ser-146–Arg-169 are enriched in polar residues.

This sequence belongs to the TatB family. As to quaternary structure, the Tat system comprises two distinct complexes: a TatABC complex, containing multiple copies of TatA, TatB and TatC subunits, and a separate TatA complex, containing only TatA subunits. Substrates initially bind to the TatABC complex, which probably triggers association of the separate TatA complex to form the active translocon.

It localises to the cell inner membrane. Its function is as follows. Part of the twin-arginine translocation (Tat) system that transports large folded proteins containing a characteristic twin-arginine motif in their signal peptide across membranes. Together with TatC, TatB is part of a receptor directly interacting with Tat signal peptides. TatB may form an oligomeric binding site that transiently accommodates folded Tat precursor proteins before their translocation. The chain is Sec-independent protein translocase protein TatB from Saccharophagus degradans (strain 2-40 / ATCC 43961 / DSM 17024).